We begin with the raw amino-acid sequence, 231 residues long: Ion-translocating oxidoreductase complex subunit E (231 aa).

6 helical membrane-spanning segments follow: residues 18–38 (ALVQLLGLCPLLAVTSTATNA), 39–59 (LGLGLATTLVLTLTNLTISTL), 63–83 (TPSEIRIPIYVMIIASVVSAV), 86–106 (LINAYAFGLYQSLGIFIPLIV), 125–145 (ALSALDGFSIGMGATCAMFVL), and 182–202 (PFLLAMLPPGAFIGLGLMLAG).

It belongs to the NqrDE/RnfAE family. In terms of assembly, the complex is composed of six subunits: RsxA, RsxB, RsxC, RsxD, RsxE and RsxG.

It is found in the cell inner membrane. Its function is as follows. Part of a membrane-bound complex that couples electron transfer with translocation of ions across the membrane. Required to maintain the reduced state of SoxR. The polypeptide is Ion-translocating oxidoreductase complex subunit E (Escherichia coli O6:K15:H31 (strain 536 / UPEC)).